A 332-amino-acid polypeptide reads, in one-letter code: 2,3-diketo-L-gulonate reductase (332 aa).

Catalysis depends on His-44, which acts as the Proton donor. Residues 168–174 (ITMVDMS), 224–225 (WK), and 304–306 (GHE) contribute to the NAD(+) site.

The protein belongs to the LDH2/MDH2 oxidoreductase family. DlgD subfamily. As to quaternary structure, homodimer.

It is found in the cytoplasm. It carries out the reaction 3-dehydro-L-gulonate + NAD(+) = 2,3-dioxo-L-gulonate + NADH + H(+). The enzyme catalyses 3-dehydro-L-gulonate + NADP(+) = 2,3-dioxo-L-gulonate + NADPH + H(+). In terms of biological role, catalyzes the reduction of 2,3-diketo-L-gulonate in the presence of NADH, to form 3-keto-L-gulonate. The chain is 2,3-diketo-L-gulonate reductase from Escherichia fergusonii (strain ATCC 35469 / DSM 13698 / CCUG 18766 / IAM 14443 / JCM 21226 / LMG 7866 / NBRC 102419 / NCTC 12128 / CDC 0568-73).